The sequence spans 392 residues: General receptor for phosphoinositides 1-associated scaffold protein (392 aa).

A disordered region spans residues 1–50; it reads MTLRRLRKLQQKEEATAAPDPAGRAPDSEAARAAPLPSGPPAAAAPPGAP. Pro residues predominate over residues 37–49; it reads PSGPPAAAAPPGA. At Thr-76 the chain carries Phosphothreonine. At Ser-93 the chain carries Phosphoserine. The 90-residue stretch at 100-189 folds into the PDZ domain; it reads VLTLEKGDNQ…VLRLETLYGT (90 aa). An interaction with PSCD3 region spans residues 180-257; that stretch reads VLRLETLYGT…GAGLLPGSLP (78 aa). Residue Tyr-236 is modified to Phosphotyrosine. Residue Arg-269 is modified to Omega-N-methylarginine. The interval 294 to 315 is disordered; it reads PQALPPPPPPARALGPSSAETP. The residue at position 384 (Ser-384) is a Phosphoserine.

In terms of assembly, heteromer. Composed of TAMALIN, CYTH2 and at least one GRM1. Also interacts with GRM2, GRM3 and GRM5. Interacts with CYTH3. As to expression, highly expressed in brain, heart and lung, and to a lower extent in embryo, kidney and ovary.

Its subcellular location is the cytoplasm. The protein localises to the perinuclear region. It is found in the cell membrane. The protein resides in the postsynaptic cell membrane. In terms of biological role, plays a role in intracellular trafficking and contributes to the macromolecular organization of group 1 metabotropic glutamate receptors (mGluRs) at synapses. This Mus musculus (Mouse) protein is General receptor for phosphoinositides 1-associated scaffold protein.